The chain runs to 155 residues: Regulatory protein RecX (155 aa).

This sequence belongs to the RecX family.

It is found in the cytoplasm. Modulates RecA activity. The chain is Regulatory protein RecX from Pseudomonas fluorescens (strain ATCC BAA-477 / NRRL B-23932 / Pf-5).